Here is a 185-residue protein sequence, read N- to C-terminus: Ribosome-recycling factor (185 aa).

It belongs to the RRF family.

It is found in the cytoplasm. Its function is as follows. Responsible for the release of ribosomes from messenger RNA at the termination of protein biosynthesis. May increase the efficiency of translation by recycling ribosomes from one round of translation to another. The sequence is that of Ribosome-recycling factor from Corynebacterium aurimucosum (strain ATCC 700975 / DSM 44827 / CIP 107346 / CN-1) (Corynebacterium nigricans).